A 334-amino-acid polypeptide reads, in one-letter code: MKQHIGYLGMGIWGFCLASLLANKGYPVVAWSRNPDLIKQLQEERRHPLAPNVVISPNLSFTTDMKEAIHNAFMIVEGVTSAGIRPVAEQLKQITDLSVPFVITSKGIEQNTGLLLSEIMLEVLGDSVTPYLGYLSGPSIAKEVLNGSPCSVVVSAYDSQTLKQIHEAFSLPTFRVYPNTDIKGAALGGALKNVIAIACGIAEGLSFGNNAKAGLVTRGLHEMRKLAAIMDCKPETLNGLAGLGDLCVTCFSESSRNLRFGHLLAQGLTFEQAKAKIGMVVEGAYTALSAYQVAKHHKIDMPITTGIYRVLYENLDLKEGIALLLQRNTKEEFL.

Positions 13, 33, and 106 each coordinate NADPH. Residues K106, G137, and S139 each coordinate sn-glycerol 3-phosphate. Position 141 (A141) interacts with NADPH. Sn-glycerol 3-phosphate contacts are provided by K192, D245, S255, R256, and N257. K192 serves as the catalytic Proton acceptor. R256 provides a ligand contact to NADPH. 2 residues coordinate NADPH: V280 and E282.

It belongs to the NAD-dependent glycerol-3-phosphate dehydrogenase family.

It is found in the cytoplasm. The catalysed reaction is sn-glycerol 3-phosphate + NAD(+) = dihydroxyacetone phosphate + NADH + H(+). It catalyses the reaction sn-glycerol 3-phosphate + NADP(+) = dihydroxyacetone phosphate + NADPH + H(+). It participates in membrane lipid metabolism; glycerophospholipid metabolism. Catalyzes the reduction of the glycolytic intermediate dihydroxyacetone phosphate (DHAP) to sn-glycerol 3-phosphate (G3P), the key precursor for phospholipid synthesis. The polypeptide is Glycerol-3-phosphate dehydrogenase [NAD(P)+] (Chlamydia pneumoniae (Chlamydophila pneumoniae)).